The sequence spans 226 residues: Glutathione S-transferase kappa 1 (226 aa).

16–18 (SPY) serves as a coordination point for glutathione. An N6-succinyllysine modification is found at lysine 49. Asparagine 53 is a glutathione binding site. Lysine 71 and lysine 85 each carry N6-acetyllysine. Lysine 116 carries the post-translational modification N6-acetyllysine; alternate. At lysine 116 the chain carries N6-succinyllysine; alternate. N6-succinyllysine is present on lysine 144. Lysine 158 carries the post-translational modification N6-acetyllysine; alternate. Lysine 158 is modified (N6-succinyllysine; alternate). 2 positions are modified to N6-acetyllysine: lysine 165 and lysine 169. Glutathione is bound by residues leucine 183 and 200 to 201 (SD).

It belongs to the GST superfamily. Kappa family. In terms of assembly, homodimer. Ubiquitous.

It localises to the peroxisome. The catalysed reaction is RX + glutathione = an S-substituted glutathione + a halide anion + H(+). Glutathione S-transferase that catalyzes the conjugation of glutathione to exogenous and endogenous compounds. Significant glutathione conjugating activity is found only with the model substrate, 1-chloro-2,4-dinitrobenzene (CDNB). The sequence is that of Glutathione S-transferase kappa 1 (GSTK1) from Homo sapiens (Human).